An 809-amino-acid polypeptide reads, in one-letter code: Phenylalanine--tRNA ligase beta subunit (809 aa).

In terms of domain architecture, tRNA-binding spans 39 to 153 (APPFSQIVVG…EDTPVGADIR (115 aa)). One can recognise a B5 domain in the interval 404 to 479 (PKREPVRMRV…RIYGFEQIPA (76 aa)). The Mg(2+) site is built by D457, D463, E466, and E467. One can recognise an FDX-ACB domain in the interval 706–808 (PRVPAVTRDI…AGDAFGARLR (103 aa)).

The protein belongs to the phenylalanyl-tRNA synthetase beta subunit family. Type 1 subfamily. In terms of assembly, tetramer of two alpha and two beta subunits. Mg(2+) serves as cofactor.

Its subcellular location is the cytoplasm. The enzyme catalyses tRNA(Phe) + L-phenylalanine + ATP = L-phenylalanyl-tRNA(Phe) + AMP + diphosphate + H(+). The chain is Phenylalanine--tRNA ligase beta subunit from Ralstonia nicotianae (strain ATCC BAA-1114 / GMI1000) (Ralstonia solanacearum).